We begin with the raw amino-acid sequence, 287 residues long: Fructose-1,6-bisphosphatase class 1 (287 aa).

The Mg(2+) site is built by Glu-67, Asp-86, Leu-88, and Asp-89. Residues 89–92 (DGSS), Tyr-195, and Lys-226 contribute to the substrate site. A Mg(2+)-binding site is contributed by Glu-232.

This sequence belongs to the FBPase class 1 family. Homotetramer. Mg(2+) serves as cofactor.

Its subcellular location is the cytoplasm. It catalyses the reaction beta-D-fructose 1,6-bisphosphate + H2O = beta-D-fructose 6-phosphate + phosphate. Its pathway is carbohydrate biosynthesis; gluconeogenesis. The protein is Fructose-1,6-bisphosphatase class 1 of Campylobacter concisus (strain 13826).